A 347-amino-acid chain; its full sequence is Cell shape-determining protein MreB (347 aa).

ATP-binding positions include 19–21 (TAN), 165–167 (GGT), 213–216 (ERIK), and 295–298 (GGAL).

Belongs to the FtsA/MreB family. As to quaternary structure, forms polymers in the presence of ATP. Forms pairs of protofilaments that adopt an antiparallel arrangement and bind to lipids.

It localises to the cytoplasm. In terms of biological role, forms membrane-associated dynamic filaments that are essential for cell shape determination. Acts by regulating cell wall synthesis and cell elongation, and thus cell shape. A feedback loop between cell geometry and MreB localization may maintain elongated cell shape by targeting cell wall growth to regions of negative cell wall curvature. Required for mid-cell peptidoglycan synthesis and cell division. Directs the localization of the cytosolic peptidoglycan precursor-synthesizing enzyme MurG. Also required for proper chromosome segregation. Directs the segregation of origin-proximal but not origin-distal loci. The protein is Cell shape-determining protein MreB of Caulobacter vibrioides (strain NA1000 / CB15N) (Caulobacter crescentus).